Here is a 634-residue protein sequence, read N- to C-terminus: Chaperone protein HtpG (634 aa).

Residues 1 to 344 (MNETVANNKE…SNDLPLNVSR (344 aa)) are a; substrate-binding. A b region spans residues 345–561 (EILQDNKVTQ…DFEMGTQMAK (217 aa)). A c region spans residues 562 to 634 (LLAAAGQAVP…TAINSLLTKG (73 aa)).

The protein belongs to the heat shock protein 90 family. Homodimer.

It localises to the cytoplasm. Functionally, molecular chaperone. Has ATPase activity. In Vibrio vulnificus (strain YJ016), this protein is Chaperone protein HtpG.